The primary structure comprises 271 residues: Regulatory protein RecX (271 aa).

It belongs to the RecX family.

It localises to the cytoplasm. Its function is as follows. Modulates RecA activity. The protein is Regulatory protein RecX of Lactobacillus delbrueckii subsp. bulgaricus (strain ATCC BAA-365 / Lb-18).